Consider the following 766-residue polypeptide: AMP deaminase 3 (766 aa).

2 positions are modified to phosphoserine: S85 and S107. The interval 89–114 (QMPTQQDWKGPPTASPAMSPATPLVP) is disordered. The segment covering 99–110 (PPTASPAMSPAT) has biased composition (low complexity). Zn(2+) contacts are provided by H316 and H318. Residues H318 and 387–392 (KFNSKY) each bind substrate. H585 serves as a coordination point for Zn(2+). Residue E588 coordinates substrate. The Proton acceptor role is filled by H607. D662 lines the Zn(2+) pocket. 663–666 (DPMQ) lines the substrate pocket.

It belongs to the metallo-dependent hydrolases superfamily. Adenosine and AMP deaminases family. In terms of assembly, homotetramer. Zn(2+) is required as a cofactor. Found in heart, lung brain, spleen, kidney and to a lesser extent in liver.

It carries out the reaction AMP + H2O + H(+) = IMP + NH4(+). It functions in the pathway purine metabolism; IMP biosynthesis via salvage pathway; IMP from AMP: step 1/1. Its function is as follows. AMP deaminase plays a critical role in energy metabolism. The chain is AMP deaminase 3 from Mus musculus (Mouse).